The following is a 125-amino-acid chain: Large ribosomal subunit protein bL12 (125 aa).

This sequence belongs to the bacterial ribosomal protein bL12 family. In terms of assembly, homodimer. Part of the ribosomal stalk of the 50S ribosomal subunit. Forms a multimeric L10(L12)X complex, where L10 forms an elongated spine to which 2 to 4 L12 dimers bind in a sequential fashion. Binds GTP-bound translation factors.

In terms of biological role, forms part of the ribosomal stalk which helps the ribosome interact with GTP-bound translation factors. Is thus essential for accurate translation. This chain is Large ribosomal subunit protein bL12, found in Helicobacter pylori (strain HPAG1).